The sequence spans 247 residues: 3-deoxy-manno-octulosonate cytidylyltransferase (247 aa).

This sequence belongs to the KdsB family.

Its subcellular location is the cytoplasm. The enzyme catalyses 3-deoxy-alpha-D-manno-oct-2-ulosonate + CTP = CMP-3-deoxy-beta-D-manno-octulosonate + diphosphate. It functions in the pathway nucleotide-sugar biosynthesis; CMP-3-deoxy-D-manno-octulosonate biosynthesis; CMP-3-deoxy-D-manno-octulosonate from 3-deoxy-D-manno-octulosonate and CTP: step 1/1. It participates in bacterial outer membrane biogenesis; lipopolysaccharide biosynthesis. Functionally, activates KDO (a required 8-carbon sugar) for incorporation into bacterial lipopolysaccharide in Gram-negative bacteria. The sequence is that of 3-deoxy-manno-octulosonate cytidylyltransferase from Leptospira interrogans serogroup Icterohaemorrhagiae serovar Lai (strain 56601).